Reading from the N-terminus, the 366-residue chain is Anhydro-N-acetylmuramic acid kinase (366 aa).

10–17 serves as a coordination point for ATP; it reads GTSMDGID.

Belongs to the anhydro-N-acetylmuramic acid kinase family.

The enzyme catalyses 1,6-anhydro-N-acetyl-beta-muramate + ATP + H2O = N-acetyl-D-muramate 6-phosphate + ADP + H(+). It participates in amino-sugar metabolism; 1,6-anhydro-N-acetylmuramate degradation. Its pathway is cell wall biogenesis; peptidoglycan recycling. Its function is as follows. Catalyzes the specific phosphorylation of 1,6-anhydro-N-acetylmuramic acid (anhMurNAc) with the simultaneous cleavage of the 1,6-anhydro ring, generating MurNAc-6-P. Is required for the utilization of anhMurNAc either imported from the medium or derived from its own cell wall murein, and thus plays a role in cell wall recycling. This chain is Anhydro-N-acetylmuramic acid kinase, found in Legionella pneumophila (strain Lens).